The sequence spans 514 residues: Deoxynucleoside triphosphate triphosphohydrolase SAMHD1 homolog (514 aa).

Residues 1-24 (MNNTFKYVNEDVSGTEGEESDYDP) are disordered. Residue Lys-80 coordinates GTP. Asn-83 contacts a 2'-deoxyribonucleoside 5'-triphosphate. Position 101–109 (101–109 (DTEQFQRLR)) interacts with GTP. Gln-113 and Arg-128 together coordinate substrate. In terms of domain architecture, HD spans 128-259 (RFEHSIGVSH…SVDVDKFDYL (132 aa)). The Zn(2+) site is built by His-131, His-170, and Asp-171. His-174 is a binding site for substrate. His-196 is an active-site residue. Substrate-binding positions include 252-258 (DVDKFDY), Tyr-258, and Asp-262. Asp-254 contacts Zn(2+). Residues Arg-276, 291–293 (LSK), and Asn-297 contribute to the a 2'-deoxyribonucleoside 5'-triphosphate site. Substrate is bound by residues Arg-305 and 309-314 (HKLVYT). Positions 315 and 316 each coordinate a 2'-deoxyribonucleoside 5'-triphosphate. 2 residues coordinate GTP: Arg-380 and Lys-384.

It belongs to the SAMHD1 family. As to quaternary structure, homodimer; in absence of GTP and dNTP. Homotetramer; in GTP- and dNTP-bound form. Zn(2+) serves as cofactor.

The catalysed reaction is a 2'-deoxyribonucleoside 5'-triphosphate + H2O = a 2'-deoxyribonucleoside + triphosphate + H(+). Allosterically activated and regulated via the combined actions of GTP and dNTPs (dATP, dGTP, dTTP and dCTP): Allosteric site 1 binds GTP, while allosteric site 2 binds dNTP. Allosteric activation promotes the formation of highly active homotetramers. Has deoxynucleoside triphosphate (dNTPase) activity. The protein is Deoxynucleoside triphosphate triphosphohydrolase SAMHD1 homolog of Dictyostelium discoideum (Social amoeba).